Here is a 335-residue protein sequence, read N- to C-terminus: Histidinol-phosphatase (335 aa).

This sequence belongs to the PHP hydrolase family. HisK subfamily.

The enzyme catalyses L-histidinol phosphate + H2O = L-histidinol + phosphate. Its pathway is amino-acid biosynthesis; L-histidine biosynthesis; L-histidine from 5-phospho-alpha-D-ribose 1-diphosphate: step 8/9. In Saccharomyces cerevisiae (strain ATCC 204508 / S288c) (Baker's yeast), this protein is Histidinol-phosphatase (HIS2).